Reading from the N-terminus, the 217-residue chain is Peroxiredoxin (217 aa).

The Thioredoxin domain maps to 2 to 159; sequence PVIGEKFPEV…IVRLVKALQV (158 aa). The active-site Cysteine sulfenic acid (-SOH) intermediate is the Cys-46. A substrate-binding site is contributed by Arg-122. A disulfide bridge links Cys-206 with Cys-212.

This sequence belongs to the peroxiredoxin family. Prx6 subfamily. In terms of assembly, homodecamer. Pentamer of dimers that assemble into a ring structure.

The protein localises to the cytoplasm. The enzyme catalyses a hydroperoxide + [thioredoxin]-dithiol = an alcohol + [thioredoxin]-disulfide + H2O. Functionally, thiol-specific peroxidase that catalyzes the reduction of hydrogen peroxide and organic hydroperoxides to water and alcohols, respectively. Plays a role in cell protection against oxidative stress by detoxifying peroxides. The chain is Peroxiredoxin from Methanocaldococcus jannaschii (strain ATCC 43067 / DSM 2661 / JAL-1 / JCM 10045 / NBRC 100440) (Methanococcus jannaschii).